The chain runs to 249 residues: Nodulation protein H (249 aa).

Its function is as follows. Required for the formation of sulfated nod factor. Proposed to transfer activated sulfate (PAPS) to a N-acetylglucosamine of the nod factor. This is Nodulation protein H (nodH) from Rhizobium tropici.